The chain runs to 492 residues: Ferruginol synthase (492 aa).

A helical transmembrane segment spans residues 1–21 (MDPFPLVAAALFIAATWFITF). Cys436 is a heme binding site.

This sequence belongs to the cytochrome P450 family. Requires heme as cofactor. Expressed in leaf glandular trichomes.

It localises to the membrane. It catalyses the reaction abieta-8,11,13-triene + reduced [NADPH--hemoprotein reductase] + O2 = ferruginol + oxidized [NADPH--hemoprotein reductase] + H2O + H(+). It carries out the reaction ferruginol + reduced [NADPH--hemoprotein reductase] + O2 = 11-hydroxyferruginol + oxidized [NADPH--hemoprotein reductase] + H2O + H(+). The enzyme catalyses miltiradiene + 2 reduced [NADPH--hemoprotein reductase] + 2 O2 = 11-oxomiltiradiene + 2 oxidized [NADPH--hemoprotein reductase] + 3 H2O + 2 H(+). It participates in secondary metabolite biosynthesis; terpenoid biosynthesis. Functionally, monooxygenase involved in the biosynthesis of labdane-related diterpenes natural products. Catalyzes the oxidation of abietatriene to produce ferruginol. Catalyzes the oxidation of ferruginol at C-12 to produce 11-hydroxyferruginol. Ferruginol and 11-hydroxyferruginol are intermediates in the biosynthesis of carnosate, a potent antioxidant. May also convert miltiradiene into 11-oxomiltiradiene. The protein is Ferruginol synthase of Salvia fruticosa (Greek sage).